We begin with the raw amino-acid sequence, 255 residues long: Sushi domain-containing protein 3 (255 aa).

The disordered stretch occupies residues 1 to 25; sequence MRWAAATLRGKARPRGRAGVTTPAP. Residues 1–103 are Extracellular-facing; sequence MRWAAATLRG…VPPHETFGFK (103 aa). N-linked (GlcNAc...) asparagine glycosylation occurs at N27. Residues 30-93 enclose the Sushi domain; sequence GTCAKLRLPP…WSSGSPVCKL (64 aa). 2 disulfides stabilise this stretch: C32–C75 and C61–C91. A helical membrane pass occupies residues 104-124; the sequence is VAVIASIVSCAIILLMSMAFL. At 125–255 the chain is on the cytoplasmic side; sequence TCCLLKCVKK…PQQPAAYALG (131 aa). A disordered region spans residues 173–255; that stretch reads SGPSQAHDNH…PQQPAAYALG (83 aa). The span at 179-191 shows a compositional bias: basic and acidic residues; that stretch reads HDNHSFTTDHGES.

As to expression, highly expressed in estrogen receptor-positive breast tumors.

It is found in the cell membrane. In terms of biological role, may play a role in breast tumorigenesis by promoting estrogen-dependent cell proliferation, cell-cell interactions and migration. The sequence is that of Sushi domain-containing protein 3 (SUSD3) from Homo sapiens (Human).